The following is a 142-amino-acid chain: Large ribosomal subunit protein uL22 (142 aa).

Residues arginine 122–alanine 142 are disordered.

Belongs to the universal ribosomal protein uL22 family. Part of the 50S ribosomal subunit.

Functionally, this protein binds specifically to 23S rRNA; its binding is stimulated by other ribosomal proteins, e.g. L4, L17, and L20. It is important during the early stages of 50S assembly. It makes multiple contacts with different domains of the 23S rRNA in the assembled 50S subunit and ribosome. Its function is as follows. The globular domain of the protein is located near the polypeptide exit tunnel on the outside of the subunit, while an extended beta-hairpin is found that lines the wall of the exit tunnel in the center of the 70S ribosome. The protein is Large ribosomal subunit protein uL22 of Gluconobacter oxydans (strain 621H) (Gluconobacter suboxydans).